Consider the following 209-residue polypeptide: Probable GTP-binding protein EngB (209 aa).

Residues 24-198 (EGMEVAFAGR…HGILDQWLGL (175 aa)) form the EngB-type G domain. GTP-binding positions include 32 to 39 (GRSNAGKS), 59 to 63 (GRTQL), 77 to 80 (DLPG), 144 to 147 (TKAD), and 177 to 179 (FSA). Serine 39 and threonine 61 together coordinate Mg(2+).

Belongs to the TRAFAC class TrmE-Era-EngA-EngB-Septin-like GTPase superfamily. EngB GTPase family. Mg(2+) serves as cofactor.

Its function is as follows. Necessary for normal cell division and for the maintenance of normal septation. The polypeptide is Probable GTP-binding protein EngB (Thioalkalivibrio sulfidiphilus (strain HL-EbGR7)).